Here is a 291-residue protein sequence, read N- to C-terminus: Phosphatidylglycerol--prolipoprotein diacylglyceryl transferase (291 aa).

7 helical membrane passes run 21 to 41 (VALHWYGLMYLVGFVFAMWLA), 60 to 80 (LLYAGFLGVFLGGRIGYVLFY), 96 to 116 (WDGGMSFHGGLIGVILVMIIF), 130 to 150 (FIAPLIPFGLGAGRLGNFING), 198 to 218 (SQLYELALEGVVLFIILNLFI), 225 to 245 (GAVSGLFLIGYGAFRIIVEFF), and 260 to 280 (ISMGQILSIPMIIAGAIMMVW). R143 provides a ligand contact to a 1,2-diacyl-sn-glycero-3-phospho-(1'-sn-glycerol).

It belongs to the Lgt family.

The protein resides in the cell inner membrane. The enzyme catalyses L-cysteinyl-[prolipoprotein] + a 1,2-diacyl-sn-glycero-3-phospho-(1'-sn-glycerol) = an S-1,2-diacyl-sn-glyceryl-L-cysteinyl-[prolipoprotein] + sn-glycerol 1-phosphate + H(+). Its pathway is protein modification; lipoprotein biosynthesis (diacylglyceryl transfer). Functionally, catalyzes the transfer of the diacylglyceryl group from phosphatidylglycerol to the sulfhydryl group of the N-terminal cysteine of a prolipoprotein, the first step in the formation of mature lipoproteins. The polypeptide is Phosphatidylglycerol--prolipoprotein diacylglyceryl transferase (Salmonella newport (strain SL254)).